We begin with the raw amino-acid sequence, 122 residues long: Large ribosomal subunit protein bL12 (122 aa).

It belongs to the bacterial ribosomal protein bL12 family. As to quaternary structure, homodimer. Part of the ribosomal stalk of the 50S ribosomal subunit. Forms a multimeric L10(L12)X complex, where L10 forms an elongated spine to which 2 to 4 L12 dimers bind in a sequential fashion. Binds GTP-bound translation factors.

Forms part of the ribosomal stalk which helps the ribosome interact with GTP-bound translation factors. Is thus essential for accurate translation. In Shewanella woodyi (strain ATCC 51908 / MS32), this protein is Large ribosomal subunit protein bL12.